Reading from the N-terminus, the 98-residue chain is Sm-like protein LSM8 (98 aa).

One can recognise a Sm domain in the interval Ala2–Glu78.

Belongs to the snRNP Sm proteins family. In terms of assembly, component of the heptameric LSM2-LSM8 complex that forms a seven-membered ring structure with a donut shape. The LSM subunits are arranged in the order LSM8, LSM2, LSM3, LSM6, LSM5, LSM7 and LSM4. LSM8 subunit interacts only with its two neighboring subunits, LSM2 and LSM4. Interacts with the prefoldin co-chaperone subunits PFD1, PFD2, PFD3, PFD4, PFD5 and PFD6. In terms of tissue distribution, expressed in roots, leaves, stems, flowers and siliques.

It is found in the nucleus. In terms of biological role, component of the nuclear LSM2-LSM8 complex which is involved splicing nuclear mRNAs. LSM2-LSM8 binds directly to the U6 small nuclear RNAs (snRNAs). LSM8 is essential for the formation of the nuclear LSM2-LSM8 complex involved in the accurate splicing of selected development-related mRNAs through the stabilization of the spliceosomal U6 snRNA. Plays a critical role in the regulation of development-related gene expression. The chain is Sm-like protein LSM8 from Arabidopsis thaliana (Mouse-ear cress).